Reading from the N-terminus, the 422-residue chain is UDP-N-acetylmuramoylalanine--D-glutamate ligase (422 aa).

An ATP-binding site is contributed by 102 to 108 (GTNGKTT).

The protein belongs to the MurCDEF family.

It localises to the cytoplasm. It catalyses the reaction UDP-N-acetyl-alpha-D-muramoyl-L-alanine + D-glutamate + ATP = UDP-N-acetyl-alpha-D-muramoyl-L-alanyl-D-glutamate + ADP + phosphate + H(+). It participates in cell wall biogenesis; peptidoglycan biosynthesis. Cell wall formation. Catalyzes the addition of glutamate to the nucleotide precursor UDP-N-acetylmuramoyl-L-alanine (UMA). The chain is UDP-N-acetylmuramoylalanine--D-glutamate ligase from Helicobacter pylori (strain ATCC 700392 / 26695) (Campylobacter pylori).